A 99-amino-acid polypeptide reads, in one-letter code: Large ribosomal subunit protein bL27 (99 aa).

The segment at 1–21 (MAHKKGGGSTRNGRDSRAKRL) is disordered.

This sequence belongs to the bacterial ribosomal protein bL27 family.

This chain is Large ribosomal subunit protein bL27, found in Thermomicrobium roseum (strain ATCC 27502 / DSM 5159 / P-2).